Here is a 258-residue protein sequence, read N- to C-terminus: MKNYLLQIEYFGKNYCGWQRQSHSLSVQEELEKALSKIANQNIEVTCAGRTDTGVHATSQIVNFYSNAYRPLSAWQRGVNALLPQDIKILAVQQVNNNFNSRFTAINRTYNYIIYNSATSSPIFAEHCLWENRELDIDKMNQACEYLLGEQDFSSFRSSQCQSNTPFRNIQKAEFIKQGSFIVFEVVGNAFLHHMIRNLVGSLLKVGLGFESPEWIKVVLEAKDRTQAAETAKAHGLYFVGVEYPEFSFKRQIIKLFC.

The active-site Nucleophile is Asp52. Residue Tyr110 coordinates substrate.

Belongs to the tRNA pseudouridine synthase TruA family. In terms of assembly, homodimer.

It carries out the reaction uridine(38/39/40) in tRNA = pseudouridine(38/39/40) in tRNA. Its function is as follows. Formation of pseudouridine at positions 38, 39 and 40 in the anticodon stem and loop of transfer RNAs. The polypeptide is tRNA pseudouridine synthase A (Francisella tularensis subsp. holarctica (strain FTNF002-00 / FTA)).